The primary structure comprises 222 residues: Beta-amylase (222 aa).

Thr36 is a substrate binding site. The active-site Proton acceptor is the Glu74. Residues 75 to 76 (NA) and Arg114 contribute to the substrate site.

This sequence belongs to the glycosyl hydrolase 14 family.

It catalyses the reaction Hydrolysis of (1-&gt;4)-alpha-D-glucosidic linkages in polysaccharides so as to remove successive maltose units from the non-reducing ends of the chains.. This chain is Beta-amylase (BMY1), found in Secale cereale (Rye).